We begin with the raw amino-acid sequence, 130 residues long: Glycine cleavage system H protein (130 aa).

The region spanning 22-103 (QAWIGISDYA…PYANYIVVVA (82 aa)) is the Lipoyl-binding domain. N6-lipoyllysine is present on Lys63.

Belongs to the GcvH family. As to quaternary structure, the glycine cleavage system is composed of four proteins: P, T, L and H. It depends on (R)-lipoate as a cofactor.

Functionally, the glycine cleavage system catalyzes the degradation of glycine. The H protein shuttles the methylamine group of glycine from the P protein to the T protein. The sequence is that of Glycine cleavage system H protein from Syntrophomonas wolfei subsp. wolfei (strain DSM 2245B / Goettingen).